Reading from the N-terminus, the 173-residue chain is dCTP deaminase, dUMP-forming (173 aa).

Residues 93-98, Asp111, 119-121, Gln138, and Tyr151 contribute to the dCTP site; these read RSSIGR and TLE. Glu121 functions as the Proton donor/acceptor in the catalytic mechanism.

It belongs to the dCTP deaminase family. As to quaternary structure, homotrimer.

It carries out the reaction dCTP + 2 H2O = dUMP + NH4(+) + diphosphate. Its pathway is pyrimidine metabolism; dUMP biosynthesis; dUMP from dCTP: step 1/1. Bifunctional enzyme that catalyzes both the deamination of dCTP to dUTP and the hydrolysis of dUTP to dUMP without releasing the toxic dUTP intermediate. This is dCTP deaminase, dUMP-forming from Clostridium acetobutylicum (strain ATCC 824 / DSM 792 / JCM 1419 / IAM 19013 / LMG 5710 / NBRC 13948 / NRRL B-527 / VKM B-1787 / 2291 / W).